A 175-amino-acid polypeptide reads, in one-letter code: ATP-dependent protease subunit HslV (175 aa).

Residue threonine 2 is part of the active site. 3 residues coordinate Na(+): glycine 158, cysteine 161, and threonine 164.

It belongs to the peptidase T1B family. HslV subfamily. As to quaternary structure, a double ring-shaped homohexamer of HslV is capped on each side by a ring-shaped HslU homohexamer. The assembly of the HslU/HslV complex is dependent on binding of ATP.

The protein localises to the cytoplasm. It carries out the reaction ATP-dependent cleavage of peptide bonds with broad specificity.. Allosterically activated by HslU binding. In terms of biological role, protease subunit of a proteasome-like degradation complex believed to be a general protein degrading machinery. This is ATP-dependent protease subunit HslV from Haemophilus influenzae (strain PittEE).